The primary structure comprises 410 residues: E3 ubiquitin-protein ligase MARCHF4 (410 aa).

Positions 1-18 (MLMPLCGLLWWWWCCCSG) are cleaved as a signal peptide. A disordered region spans residues 92 to 136 (GPREVVGREPPPVPPPPPLPPSSVEDDWGGPATEPPASLLSSASS). Residues 100–112 (EPPPVPPPPPLPP) show a composition bias toward pro residues. Low complexity predominate over residues 126 to 136 (PPASLLSSASS). An RING-CH-type zinc finger spans residues 155–215 (DSGMRTPLCR…ELCYYKYHVI (61 aa)). Positions 163, 166, 179, 181, 189, 192, 205, and 208 each coordinate Zn(2+). Helical transmembrane passes span 238–258 (VAAA…LIWS) and 272–292 (LFQI…GLII). 2 disordered regions span residues 324–372 (EDQK…SGPL) and 390–410 (PHEQ…VTTV). Positions 333-346 (NPRTSSSTQANIPS) are enriched in polar residues. The segment covering 352-366 (AGTPAPEQGPAQAAG) has biased composition (low complexity).

Expressed in brain and placenta.

The protein localises to the golgi apparatus membrane. It catalyses the reaction S-ubiquitinyl-[E2 ubiquitin-conjugating enzyme]-L-cysteine + [acceptor protein]-L-lysine = [E2 ubiquitin-conjugating enzyme]-L-cysteine + N(6)-ubiquitinyl-[acceptor protein]-L-lysine.. The protein operates within protein modification; protein ubiquitination. Functionally, E3 ubiquitin-protein ligase that may mediate ubiquitination of MHC-I and CD4, and promote their subsequent endocytosis and sorting to lysosomes via multivesicular bodies. E3 ubiquitin ligases accept ubiquitin from an E2 ubiquitin-conjugating enzyme in the form of a thioester and then directly transfer the ubiquitin to targeted substrates. The chain is E3 ubiquitin-protein ligase MARCHF4 from Homo sapiens (Human).